Reading from the N-terminus, the 287-residue chain is ATP synthase gamma chain (287 aa).

Belongs to the ATPase gamma chain family. As to quaternary structure, F-type ATPases have 2 components, CF(1) - the catalytic core - and CF(0) - the membrane proton channel. CF(1) has five subunits: alpha(3), beta(3), gamma(1), delta(1), epsilon(1). CF(0) has three main subunits: a, b and c.

It is found in the cell inner membrane. Produces ATP from ADP in the presence of a proton gradient across the membrane. The gamma chain is believed to be important in regulating ATPase activity and the flow of protons through the CF(0) complex. The protein is ATP synthase gamma chain of Azotobacter vinelandii (strain DJ / ATCC BAA-1303).